Here is a 377-residue protein sequence, read N- to C-terminus: Cilia- and flagella-associated protein 263 (377 aa).

Coiled coils occupy residues 95–243 and 280–354; these read LTAD…NQEL and LRKE…SLKG.

The protein belongs to the CFAP263 family. As to quaternary structure, forms a complex with CFAP184; the interaction is required for functional activity in cilia. Interacts with HAP1 and PCM1.

The protein resides in the cytoplasm. It localises to the cytoskeleton. It is found in the microtubule organizing center. Its subcellular location is the centrosome. The protein localises to the centriolar satellite. The protein resides in the cell projection. It localises to the cilium. Functionally, component of centriolar satellites contributing to primary cilium formation. In complex with CFAP263, acts as a regulator of ciliary beating that connects radial spoke 3 (RS3) to the inner dynein arm (IDA) and the nexin-dynein regulatory complex (N-DRC). The complex is positioned parallel to N-DRC and forms a connection between the arch at the base of RS3, the IDA tail and N-DRC. This Homo sapiens (Human) protein is Cilia- and flagella-associated protein 263.